Consider the following 354-residue polypeptide: DNA integrity scanning protein DisA (354 aa).

Residues 6–144 enclose the DAC domain; the sequence is GIGIKNVLKI…GDIKYVLRES (139 aa). ATP contacts are provided by residues Gly73, Leu91, and 104–108; that span reads TRHRT.

Belongs to the DisA family. Homooctamer. Requires Mg(2+) as cofactor.

It carries out the reaction 2 ATP = 3',3'-c-di-AMP + 2 diphosphate. Its function is as follows. Participates in a DNA-damage check-point that is active prior to asymmetric division when DNA is damaged. DisA forms globular foci that rapidly scan along the chromosomes during sporulation, searching for lesions. When a lesion is present, DisA pauses at the lesion site. This triggers a cellular response that culminates in a temporary block in sporulation initiation. Also has diadenylate cyclase activity, catalyzing the condensation of 2 ATP molecules into cyclic di-AMP (c-di-AMP). c-di-AMP acts as a signaling molecule that couples DNA integrity with progression of sporulation. The rise in c-di-AMP level generated by DisA while scanning the chromosome, operates as a positive signal that advances sporulation; upon encountering a lesion, the DisA focus arrests at the damaged site and halts c-di-AMP synthesis. This is DNA integrity scanning protein DisA from Clostridium beijerinckii (strain ATCC 51743 / NCIMB 8052) (Clostridium acetobutylicum).